A 150-amino-acid polypeptide reads, in one-letter code: UPF0506 protein SJCHGC02380 (150 aa).

An N-terminal signal peptide occupies residues 1-18 (MNTCIQLLILCLVTVINS). N-linked (GlcNAc...) asparagine glycans are attached at residues asparagine 20, asparagine 24, asparagine 36, asparagine 48, asparagine 52, and asparagine 110. Disulfide bonds link cysteine 116–cysteine 130, cysteine 123–cysteine 134, and cysteine 129–cysteine 139.

Belongs to the UPF0506 family.

It localises to the secreted. The polypeptide is UPF0506 protein SJCHGC02380 (Schistosoma japonicum (Blood fluke)).